Here is a 276-residue protein sequence, read N- to C-terminus: MAIINHKPTSPGRRGRVDVTRPELHKGKPFAALVEKKTRGSGRNNAGRITVRHKGGGHAQKYRLIDFCRNKDGIDAVVERLEYDPNRTSFIALLRYSDGERRYVIAARDMKAGDIVRNGEDAPIKDGNCLPMRNIPVGSTIYCVELKPGKGAQLARSAGASAQMVAREGKYVTVRLKSGERRLVLADCRAVLGEVSNHEHSLRSYGKAGAKRWLGIRPTVRGVVMNPVDHPHGGGEGRTASGRHPVSPWGLPTKGYKTRNNKRTDSLIVQRRKKRG.

The interval 224-265 (VMNPVDHPHGGGEGRTASGRHPVSPWGLPTKGYKTRNNKRTD) is disordered.

This sequence belongs to the universal ribosomal protein uL2 family. Part of the 50S ribosomal subunit. Forms a bridge to the 30S subunit in the 70S ribosome.

Its function is as follows. One of the primary rRNA binding proteins. Required for association of the 30S and 50S subunits to form the 70S ribosome, for tRNA binding and peptide bond formation. It has been suggested to have peptidyltransferase activity; this is somewhat controversial. Makes several contacts with the 16S rRNA in the 70S ribosome. The sequence is that of Large ribosomal subunit protein uL2 from Dichelobacter nodosus (strain VCS1703A).